Consider the following 426-residue polypeptide: Enolase (426 aa).

Gln-163 provides a ligand contact to (2R)-2-phosphoglycerate. The active-site Proton donor is Glu-205. Mg(2+) is bound by residues Asp-242, Glu-285, and Asp-312. Residues Lys-337, Arg-366, Ser-367, and Lys-388 each contribute to the (2R)-2-phosphoglycerate site. The Proton acceptor role is filled by Lys-337.

The protein belongs to the enolase family. Mg(2+) serves as cofactor.

It localises to the cytoplasm. The protein resides in the secreted. Its subcellular location is the cell surface. It carries out the reaction (2R)-2-phosphoglycerate = phosphoenolpyruvate + H2O. The protein operates within carbohydrate degradation; glycolysis; pyruvate from D-glyceraldehyde 3-phosphate: step 4/5. Its function is as follows. Catalyzes the reversible conversion of 2-phosphoglycerate (2-PG) into phosphoenolpyruvate (PEP). It is essential for the degradation of carbohydrates via glycolysis. In Rhodospirillum centenum (strain ATCC 51521 / SW), this protein is Enolase.